A 195-amino-acid chain; its full sequence is Pyridoxal 5'-phosphate synthase subunit PdxT (195 aa).

46-48 (GES) lines the L-glutamine pocket. C78 serves as the catalytic Nucleophile. Residues R107 and 136 to 137 (IR) each bind L-glutamine. Catalysis depends on charge relay system residues H173 and E175.

This sequence belongs to the glutaminase PdxT/SNO family. In terms of assembly, in the presence of PdxS, forms a dodecamer of heterodimers. Only shows activity in the heterodimer.

It catalyses the reaction aldehydo-D-ribose 5-phosphate + D-glyceraldehyde 3-phosphate + L-glutamine = pyridoxal 5'-phosphate + L-glutamate + phosphate + 3 H2O + H(+). It carries out the reaction L-glutamine + H2O = L-glutamate + NH4(+). The protein operates within cofactor biosynthesis; pyridoxal 5'-phosphate biosynthesis. In terms of biological role, catalyzes the hydrolysis of glutamine to glutamate and ammonia as part of the biosynthesis of pyridoxal 5'-phosphate. The resulting ammonia molecule is channeled to the active site of PdxS. This chain is Pyridoxal 5'-phosphate synthase subunit PdxT, found in Dehalococcoides mccartyi (strain ATCC BAA-2100 / JCM 16839 / KCTC 5957 / BAV1).